Reading from the N-terminus, the 785-residue chain is Tripartite terminase subunit 1 (785 aa).

Residues 197–225 (CAVCFEELCVTANQGATIARRLADRICNH) form a C3H1-type zinc finger. Residues 433–489 (GGAADAPKGGAGPDDDGDRVAVEEGTRGLGAPGGGGEDEDRRRGPGGQGPETWGDIA) form a disordered region. 696-703 (FASVYRCG) lines the ATP pocket.

This sequence belongs to the herpesviridae TRM1 protein family. Associates with TRM2 and TRM3 to form the tripartite terminase complex. Interacts with portal protein.

It localises to the host nucleus. Component of the molecular motor that translocates viral genomic DNA in empty capsid during DNA packaging. Forms a tripartite terminase complex together with TRM2 and TRM3 in the host cytoplasm. Once the complex reaches the host nucleus, it interacts with the capsid portal vertex. This portal forms a ring in which genomic DNA is translocated into the capsid. TRM1 carries an endonuclease activity that plays an important role for the cleavage of concatemeric viral DNA into unit length genomes. The polypeptide is Tripartite terminase subunit 1 (Human herpesvirus 1 (strain Angelotti) (HHV-1)).